We begin with the raw amino-acid sequence, 346 residues long: Glycerol-1-phosphate dehydrogenase [NAD(P)+] (346 aa).

Residues 93-97 (GTIID) and 115-118 (TTAS) each bind NAD(+). Asp120 contributes to the substrate binding site. Residue Ser124 participates in NAD(+) binding. Asp167 contributes to the substrate binding site. Zn(2+) is bound by residues Asp167 and His247. His251 is a binding site for substrate. His263 provides a ligand contact to Zn(2+).

Belongs to the glycerol-1-phosphate dehydrogenase family. Zn(2+) serves as cofactor.

The protein localises to the cytoplasm. The enzyme catalyses sn-glycerol 1-phosphate + NAD(+) = dihydroxyacetone phosphate + NADH + H(+). It carries out the reaction sn-glycerol 1-phosphate + NADP(+) = dihydroxyacetone phosphate + NADPH + H(+). It participates in membrane lipid metabolism; glycerophospholipid metabolism. Catalyzes the NAD(P)H-dependent reduction of dihydroxyacetonephosphate (DHAP or glycerone phosphate) to glycerol 1-phosphate (G1P). The G1P thus generated is used as the glycerophosphate backbone of phospholipids in the cellular membranes of Archaea. This Pyrococcus furiosus (strain ATCC 43587 / DSM 3638 / JCM 8422 / Vc1) protein is Glycerol-1-phosphate dehydrogenase [NAD(P)+].